The chain runs to 255 residues: 5'-nucleotidase SurE (255 aa).

A divalent metal cation-binding residues include D8, D9, S40, and N93.

Belongs to the SurE nucleotidase family. A divalent metal cation serves as cofactor.

It is found in the cytoplasm. The enzyme catalyses a ribonucleoside 5'-phosphate + H2O = a ribonucleoside + phosphate. In terms of biological role, nucleotidase that shows phosphatase activity on nucleoside 5'-monophosphates. In Rhodopseudomonas palustris (strain ATCC BAA-98 / CGA009), this protein is 5'-nucleotidase SurE.